A 269-amino-acid chain; its full sequence is Auxin-responsive protein IAA26 (269 aa).

Residues 25–40 show a composition bias toward basic and acidic residues; it reads YQEDKNNTDQEKKLEL. 2 disordered regions span residues 25–55 and 76–146; these read YQED…HSAI and CFNG…KQVE. The short motif at 38 to 42 is the EAR-like (transcriptional repression) element; it reads LELRL. Composition is skewed to polar residues over residues 80-93 and 117-136; these read NHFS…SVPH and LAST…GQIN. The span at 137–146 shows a compositional bias: basic and acidic residues; the sequence is KSDDGEKQVE. The PB1 domain occupies 151–250; it reads GMFVKINMDG…SVKRLRVIKS (100 aa).

It belongs to the Aux/IAA family. In terms of assembly, homodimers and heterodimers. Interacts with phytochrome A. Interacts with TPL.

The protein resides in the nucleus. In terms of biological role, aux/IAA proteins are short-lived transcriptional factors that function as repressors of early auxin response genes at low auxin concentrations. Repression is thought to result from the interaction with auxin response factors (ARFs), proteins that bind to the auxin-responsive promoter element (AuxRE). Formation of heterodimers with ARF proteins may alter their ability to modulate early auxin response genes expression. The protein is Auxin-responsive protein IAA26 (IAA26) of Arabidopsis thaliana (Mouse-ear cress).